Here is a 199-residue protein sequence, read N- to C-terminus: Isopentenyl-diphosphate Delta-isomerase (199 aa).

Positions 40 and 47 each coordinate Mn(2+). The Nudix hydrolase domain occupies 45–186; sequence PRHLAFSCHV…PALLSPWAVE (142 aa). Residue Cys-82 is part of the active site. Cys-82 provides a ligand contact to Mg(2+). His-84 lines the Mn(2+) pocket. Position 102 (Glu-102) interacts with Mg(2+). The Mn(2+) site is built by Glu-131 and Glu-133. Residue Glu-133 is part of the active site.

Belongs to the IPP isomerase type 1 family. The cofactor is Mg(2+). Mn(2+) serves as cofactor.

The protein localises to the cytoplasm. The catalysed reaction is isopentenyl diphosphate = dimethylallyl diphosphate. Its pathway is isoprenoid biosynthesis; dimethylallyl diphosphate biosynthesis; dimethylallyl diphosphate from isopentenyl diphosphate: step 1/1. In terms of biological role, catalyzes the 1,3-allylic rearrangement of the homoallylic substrate isopentenyl (IPP) to its highly electrophilic allylic isomer, dimethylallyl diphosphate (DMAPP). The chain is Isopentenyl-diphosphate Delta-isomerase from Cutibacterium acnes (strain DSM 16379 / KPA171202) (Propionibacterium acnes).